The primary structure comprises 77 residues: MKLTCMMIVAVLFLTAWTFATADDSSNGLENLFSKAHHEMKNPEASKLNKRCIEQFDPCDMIRHTCCVGVCFLMACI.

A signal peptide spans 1–22; the sequence is MKLTCMMIVAVLFLTAWTFATA. Residues 23 to 49 constitute a propeptide that is removed on maturation; that stretch reads DDSSNGLENLFSKAHHEMKNPEASKLN. Intrachain disulfides connect C52–C67, C59–C71, and C66–C76. Residue M61 is modified to Methionine sulfoxide; partial.

It belongs to the conotoxin O1 superfamily. Expressed by the venom duct.

The protein localises to the secreted. This is Conotoxin King-Kong 1 from Conus textile (Cloth-of-gold cone).